Here is a 156-residue protein sequence, read N- to C-terminus: Small ribosomal subunit protein uS7 (156 aa).

Belongs to the universal ribosomal protein uS7 family. As to quaternary structure, part of the 30S ribosomal subunit. Contacts proteins S9 and S11.

One of the primary rRNA binding proteins, it binds directly to 16S rRNA where it nucleates assembly of the head domain of the 30S subunit. Is located at the subunit interface close to the decoding center, probably blocks exit of the E-site tRNA. In Beutenbergia cavernae (strain ATCC BAA-8 / DSM 12333 / CCUG 43141 / JCM 11478 / NBRC 16432 / NCIMB 13614 / HKI 0122), this protein is Small ribosomal subunit protein uS7.